The primary structure comprises 330 residues: CRISPR-associated endonuclease Cas1 2 (330 aa).

Residues E156, H222, and E237 each contribute to the Mn(2+) site.

The protein belongs to the CRISPR-associated endonuclease Cas1 family. As to quaternary structure, homodimer, forms a heterotetramer with a Cas2 homodimer. Mg(2+) is required as a cofactor. It depends on Mn(2+) as a cofactor.

Functionally, CRISPR (clustered regularly interspaced short palindromic repeat), is an adaptive immune system that provides protection against mobile genetic elements (viruses, transposable elements and conjugative plasmids). CRISPR clusters contain spacers, sequences complementary to antecedent mobile elements, and target invading nucleic acids. CRISPR clusters are transcribed and processed into CRISPR RNA (crRNA). Acts as a dsDNA endonuclease. Involved in the integration of spacer DNA into the CRISPR cassette. In Thermodesulfovibrio yellowstonii (strain ATCC 51303 / DSM 11347 / YP87), this protein is CRISPR-associated endonuclease Cas1 2.